The chain runs to 1117 residues: Cytospin-A (1117 aa).

Disordered regions lie at residues Met-1 to Ser-176, Ser-293 to Glu-323, and Ser-358 to Glu-390. Over residues Thr-45 to Ala-90 the composition is skewed to low complexity. Over residues Thr-93 to Lys-117 the composition is skewed to polar residues. 2 stretches are compositionally biased toward basic and acidic residues: residues Ser-120 to Arg-131 and Thr-158 to Ser-171. Residues Lys-168–Gln-280 adopt a coiled-coil conformation. The span at Ser-293 to Gln-303 shows a compositional bias: polar residues. The segment covering Ser-358–Ile-377 has biased composition (low complexity). A phosphoserine mark is found at Ser-384, Ser-385, and Ser-389. Coiled coils occupy residues Ala-394 to Leu-449 and Arg-487 to Val-807. Phosphoserine is present on residues Ser-868, Ser-881, and Ser-887. A disordered region spans residues Thr-920–Glu-997. Positions Arg-946–Ser-956 are enriched in basic and acidic residues. Low complexity predominate over residues Thr-971–Thr-990. In terms of domain architecture, Calponin-homology (CH) spans Gly-1011–Glu-1116.

This sequence belongs to the cytospin-A family. As to quaternary structure, may interact with both microtubules and actin cytoskeleton.

It is found in the cytoplasm. It localises to the cytoskeleton. Its subcellular location is the spindle. The protein localises to the cell junction. The protein resides in the gap junction. Its function is as follows. Involved in cytokinesis and spindle organization. May play a role in actin cytoskeleton organization and microtubule stabilization and hence required for proper cell adhesion and migration. In Homo sapiens (Human), this protein is Cytospin-A (SPECC1L).